The following is a 168-amino-acid chain: Photosystem I assembly protein Ycf3 (168 aa).

TPR repeat units lie at residues 35-68, 72-105, and 120-153; these read AFTYYRDGMSAQSEGNYAEALQNYYEAMRLEIDP, SYILYNIGLIHTSNGEHTKALEYYFRALERNPFL, and GEQAIQQGDSEIAEAWFDQAAEYWKQAIALTPGN.

The protein belongs to the Ycf3 family.

Its subcellular location is the plastid. It is found in the chloroplast thylakoid membrane. Functionally, essential for the assembly of the photosystem I (PSI) complex. May act as a chaperone-like factor to guide the assembly of the PSI subunits. In Atropa belladonna (Belladonna), this protein is Photosystem I assembly protein Ycf3.